Here is a 412-residue protein sequence, read N- to C-terminus: Zinc finger protein 821 (412 aa).

A disordered region spans residues 26-83; sequence RQAMMKTDFPGDLGSQRQAIQQLRDQDSSSSDSEGDEEETTQDEVSSHTSEEDGGVVK. The segment covering 58 to 67 has biased composition (acidic residues); sequence SEGDEEETTQ. C2H2-type zinc fingers lie at residues 116–140 and 150–172; these read ELCQCPLCQLDCGSREQLIAHVYQH and YMCPVCGRALSSPGSLGRHLLIH. The stretch at 257–366 forms a coiled coil; it reads KWALRRQNEP…EKMDMMLRAQ (110 aa). Residues 278-319 form a disordered region; that stretch reads RTAKKSRRDNETPEEREVRRMRDREAKRLQRMQETDEQRARR.

Belongs to the krueppel C2H2-type zinc-finger protein family.

It is found in the nucleus. May be involved in transcriptional regulation. The sequence is that of Zinc finger protein 821 (ZNF821) from Homo sapiens (Human).